A 310-amino-acid polypeptide reads, in one-letter code: ADP-L-glycero-D-manno-heptose-6-epimerase (310 aa).

NADP(+) is bound by residues 10 to 11, 31 to 32, K38, K53, 75 to 79, and N92; these read FI, DN, and EGACS. Y140 serves as the catalytic Proton acceptor. K144 contacts NADP(+). N169 is a binding site for substrate. Positions 170 and 178 each coordinate NADP(+). Residue K178 is the Proton acceptor of the active site. Residues G180, H187, 201 to 204, R209, and Y272 each bind substrate; that span reads FAGS.

This sequence belongs to the NAD(P)-dependent epimerase/dehydratase family. HldD subfamily. As to quaternary structure, homopentamer. Requires NADP(+) as cofactor.

It carries out the reaction ADP-D-glycero-beta-D-manno-heptose = ADP-L-glycero-beta-D-manno-heptose. It functions in the pathway nucleotide-sugar biosynthesis; ADP-L-glycero-beta-D-manno-heptose biosynthesis; ADP-L-glycero-beta-D-manno-heptose from D-glycero-beta-D-manno-heptose 7-phosphate: step 4/4. Functionally, catalyzes the interconversion between ADP-D-glycero-beta-D-manno-heptose and ADP-L-glycero-beta-D-manno-heptose via an epimerization at carbon 6 of the heptose. The chain is ADP-L-glycero-D-manno-heptose-6-epimerase from Sodalis glossinidius (strain morsitans).